Reading from the N-terminus, the 212-residue chain is Pyridoxine/pyridoxamine 5'-phosphate oxidase (212 aa).

Residues 59–64 (RMVLMK), 74–75 (YS), Lys81, and Gln103 each bind FMN. Position 64 (Lys64) interacts with substrate. Substrate contacts are provided by Tyr121 and Arg125. FMN-binding positions include 138 to 139 (QS) and Trp183. 189–191 (RLH) contributes to the substrate binding site. FMN is bound at residue Arg193.

The protein belongs to the pyridoxamine 5'-phosphate oxidase family. As to quaternary structure, homodimer. It depends on FMN as a cofactor.

The enzyme catalyses pyridoxamine 5'-phosphate + O2 + H2O = pyridoxal 5'-phosphate + H2O2 + NH4(+). The catalysed reaction is pyridoxine 5'-phosphate + O2 = pyridoxal 5'-phosphate + H2O2. Its pathway is cofactor metabolism; pyridoxal 5'-phosphate salvage; pyridoxal 5'-phosphate from pyridoxamine 5'-phosphate: step 1/1. It participates in cofactor metabolism; pyridoxal 5'-phosphate salvage; pyridoxal 5'-phosphate from pyridoxine 5'-phosphate: step 1/1. In terms of biological role, catalyzes the oxidation of either pyridoxine 5'-phosphate (PNP) or pyridoxamine 5'-phosphate (PMP) into pyridoxal 5'-phosphate (PLP). In Rhodopseudomonas palustris (strain HaA2), this protein is Pyridoxine/pyridoxamine 5'-phosphate oxidase.